Reading from the N-terminus, the 289-residue chain is Glycine--tRNA ligase alpha subunit (289 aa).

Belongs to the class-II aminoacyl-tRNA synthetase family. Tetramer of two alpha and two beta subunits.

It is found in the cytoplasm. The enzyme catalyses tRNA(Gly) + glycine + ATP = glycyl-tRNA(Gly) + AMP + diphosphate. The polypeptide is Glycine--tRNA ligase alpha subunit (Rickettsia felis (strain ATCC VR-1525 / URRWXCal2) (Rickettsia azadi)).